The following is a 343-amino-acid chain: Palmitoyltransferase ZDHHC4 (343 aa).

Residues 1–2 lie on the Lumenal side of the membrane; it reads MD. A helical membrane pass occupies residues 3-23; sequence FLVLFSFYLAFLLICVIMICI. Over 24 to 67 the chain is Cytoplasmic; that stretch reads FTKSQRLKAVVLGGAQVCARVTPQCFQRAVQTLLHQLFHTRHPA. The helical transmembrane segment at 68 to 88 threads the bilayer; that stretch reads FLALHLLLQGLVYAEYTYEVF. Topologically, residues 89-95 are lumenal; that stretch reads SYCRELE. The helical transmembrane segment at 96-116 threads the bilayer; that stretch reads FSLPCLLLPYVLLSVNLVFFT. At 117–193 the chain is on the cytoplasmic side; sequence LTCSTNPGTI…NCIGAWNTGY (77 aa). The 51-residue stretch at 149 to 199 folds into the DHHC domain; the sequence is SRCSTCDLRKPARSKHCRVCDRCVHRFDHHCVWVNNCIGAWNTGYFLIYLL. The S-palmitoyl cysteine intermediate role is filled by Cys-179. Residues 194–214 form a helical membrane-spanning segment; it reads FLIYLLTLTASAATIAILSAA. At 215 to 255 the chain is on the lumenal side; that stretch reads FLLRLVAVSNLYQETYLDDLGRFQAVDTGFLIQHLFLAFPR. The chain crosses the membrane as a helical span at residues 256 to 276; sequence IIFLLGFVIVLSLLLAGYLCF. Residues 277 to 343 lie on the Cytoplasmic side of the membrane; that stretch reads ALYLAATNQT…ATPSYKKKKR (67 aa). The Di-lysine motif signature appears at 340–343; sequence KKKR.

Belongs to the DHHC palmitoyltransferase family. In terms of assembly, interacts with CPT1A.

It localises to the endoplasmic reticulum membrane. Its subcellular location is the golgi apparatus membrane. The protein localises to the cell membrane. It carries out the reaction L-cysteinyl-[protein] + hexadecanoyl-CoA = S-hexadecanoyl-L-cysteinyl-[protein] + CoA. Palmitoyltransferase that could catalyze the addition of palmitate onto protein substrates including the D(2) dopamine receptor DRD2, GSK3B or MAVS. Mediates GSK3B palmitoylation to prevent its AKT1-mediated phosphorylation leading to activation of the STAT3 signaling pathway. Also catalyzes MAVS palmitoylation which promotes its stabilization and activation by inhibiting 'Lys-48'- but facilitating 'Lys-63'-linked ubiquitination. This chain is Palmitoyltransferase ZDHHC4, found in Rattus norvegicus (Rat).